Reading from the N-terminus, the 304-residue chain is Sulfate adenylyltransferase subunit 2 (304 aa).

Belongs to the PAPS reductase family. CysD subfamily. Heterodimer composed of CysD, the smaller subunit, and CysN.

The catalysed reaction is sulfate + ATP + H(+) = adenosine 5'-phosphosulfate + diphosphate. The protein operates within sulfur metabolism; hydrogen sulfide biosynthesis; sulfite from sulfate: step 1/3. With CysN forms the ATP sulfurylase (ATPS) that catalyzes the adenylation of sulfate producing adenosine 5'-phosphosulfate (APS) and diphosphate, the first enzymatic step in sulfur assimilation pathway. APS synthesis involves the formation of a high-energy phosphoric-sulfuric acid anhydride bond driven by GTP hydrolysis by CysN coupled to ATP hydrolysis by CysD. This is Sulfate adenylyltransferase subunit 2 from Acinetobacter baumannii (strain SDF).